The chain runs to 533 residues: Lanosterol 14-alpha demethylase (533 aa).

Cysteine 472 contacts heme.

This sequence belongs to the cytochrome P450 family. Heme serves as cofactor.

The protein resides in the membrane. It carries out the reaction a 14alpha-methyl steroid + 3 reduced [NADPH--hemoprotein reductase] + 3 O2 = a Delta(14) steroid + formate + 3 oxidized [NADPH--hemoprotein reductase] + 4 H2O + 4 H(+). The enzyme catalyses a 14alpha-methyl steroid + reduced [NADPH--hemoprotein reductase] + O2 = a 14alpha-hydroxymethyl steroid + oxidized [NADPH--hemoprotein reductase] + H2O + H(+). It catalyses the reaction a 14alpha-hydroxymethyl steroid + reduced [NADPH--hemoprotein reductase] + O2 = a 14alpha-formyl steroid + oxidized [NADPH--hemoprotein reductase] + 2 H2O + H(+). The catalysed reaction is a 14alpha-formyl steroid + reduced [NADPH--hemoprotein reductase] + O2 = a Delta(14) steroid + formate + oxidized [NADPH--hemoprotein reductase] + H2O + 2 H(+). It carries out the reaction lanosterol + 3 reduced [NADPH--hemoprotein reductase] + 3 O2 = 4,4-dimethyl-5alpha-cholesta-8,14,24-trien-3beta-ol + formate + 3 oxidized [NADPH--hemoprotein reductase] + 4 H2O + 4 H(+). The enzyme catalyses lanosterol + reduced [NADPH--hemoprotein reductase] + O2 = 32-hydroxylanosterol + oxidized [NADPH--hemoprotein reductase] + H2O + H(+). It catalyses the reaction 32-hydroxylanosterol + reduced [NADPH--hemoprotein reductase] + O2 = 32-oxolanosterol + oxidized [NADPH--hemoprotein reductase] + 2 H2O + H(+). The catalysed reaction is 32-oxolanosterol + reduced [NADPH--hemoprotein reductase] + O2 = 4,4-dimethyl-5alpha-cholesta-8,14,24-trien-3beta-ol + formate + oxidized [NADPH--hemoprotein reductase] + H2O + 2 H(+). It carries out the reaction eburicol + 3 reduced [NADPH--hemoprotein reductase] + 3 O2 = 14-demethyleburicol + formate + 3 oxidized [NADPH--hemoprotein reductase] + 4 H2O + 4 H(+). The enzyme catalyses eburicol + reduced [NADPH--hemoprotein reductase] + O2 = 32-hydroxyeburicol + oxidized [NADPH--hemoprotein reductase] + H2O + H(+). It catalyses the reaction 32-hydroxyeburicol + reduced [NADPH--hemoprotein reductase] + O2 = 32-oxoeburicol + oxidized [NADPH--hemoprotein reductase] + 2 H2O + H(+). The catalysed reaction is 32-oxoeburicol + reduced [NADPH--hemoprotein reductase] + O2 = 14-demethyleburicol + formate + oxidized [NADPH--hemoprotein reductase] + H2O + 2 H(+). Its pathway is steroid biosynthesis; zymosterol biosynthesis; zymosterol from lanosterol: step 1/6. In terms of biological role, sterol 14alpha-demethylase that plays a critical role in the third module of ergosterol biosynthesis pathway, being ergosterol the major sterol component in fungal membranes that participates in a variety of functions. The third module or late pathway involves the ergosterol synthesis itself through consecutive reactions that mainly occur in the endoplasmic reticulum (ER) membrane. In filamentous fungi, during the initial step of this module, lanosterol (lanosta-8,24-dien-3beta-ol) can be metabolized to eburicol. Sterol 14alpha-demethylase catalyzes the three-step oxidative removal of the 14alpha-methyl group (C-32) of both these sterols in the form of formate, and converts eburicol and lanosterol to 14-demethyleburicol (4,4,24-trimethylergosta-8,14,24(28)-trienol) and 4,4-dimethyl-5alpha-cholesta-8,14,24-trien-3beta-ol, respectively, which are further metabolized by other enzymes in the pathway to ergosterol. Can also use substrates not intrinsic to fungi, such as 24,25-dihydrolanosterol (DHL), producing 4,4-dimethyl-8,14-cholestadien-3-beta-ol, but at lower rates than the endogenous substrates. This is Lanosterol 14-alpha demethylase (ERG11) from Candida glabrata (strain ATCC 2001 / BCRC 20586 / JCM 3761 / NBRC 0622 / NRRL Y-65 / CBS 138) (Yeast).